Here is a 149-residue protein sequence, read N- to C-terminus: Large ribosomal subunit protein bL17 (149 aa).

The protein belongs to the bacterial ribosomal protein bL17 family. Part of the 50S ribosomal subunit. Contacts protein L32.

The protein is Large ribosomal subunit protein bL17 of Kosmotoga olearia (strain ATCC BAA-1733 / DSM 21960 / TBF 19.5.1).